Here is a 215-residue protein sequence, read N- to C-terminus: Pyridoxine/pyridoxamine 5'-phosphate oxidase (215 aa).

Residues 9 to 12 (RRDY) and K69 each bind substrate. Residues 64–69 (RILLLK), 79–80 (FT), K86, and Q108 contribute to the FMN site. Y126, R130, and S134 together coordinate substrate. Residues 143–144 (QS) and W188 contribute to the FMN site. 194 to 196 (RLH) serves as a coordination point for substrate. R198 provides a ligand contact to FMN.

Belongs to the pyridoxamine 5'-phosphate oxidase family. In terms of assembly, homodimer. It depends on FMN as a cofactor.

It catalyses the reaction pyridoxamine 5'-phosphate + O2 + H2O = pyridoxal 5'-phosphate + H2O2 + NH4(+). The catalysed reaction is pyridoxine 5'-phosphate + O2 = pyridoxal 5'-phosphate + H2O2. It functions in the pathway cofactor metabolism; pyridoxal 5'-phosphate salvage; pyridoxal 5'-phosphate from pyridoxamine 5'-phosphate: step 1/1. Its pathway is cofactor metabolism; pyridoxal 5'-phosphate salvage; pyridoxal 5'-phosphate from pyridoxine 5'-phosphate: step 1/1. Its function is as follows. Catalyzes the oxidation of either pyridoxine 5'-phosphate (PNP) or pyridoxamine 5'-phosphate (PMP) into pyridoxal 5'-phosphate (PLP). This is Pyridoxine/pyridoxamine 5'-phosphate oxidase from Pseudomonas fluorescens (strain Pf0-1).